The sequence spans 685 residues: DNA-directed RNA polymerase subunit beta' (685 aa).

Zn(2+) contacts are provided by Cys69, Cys71, Cys87, and Cys90. Residues Asp492, Asp494, and Asp496 each contribute to the Mg(2+) site.

Belongs to the RNA polymerase beta' chain family. RpoC1 subfamily. In plastids the minimal PEP RNA polymerase catalytic core is composed of four subunits: alpha, beta, beta', and beta''. When a (nuclear-encoded) sigma factor is associated with the core the holoenzyme is formed, which can initiate transcription. Mg(2+) is required as a cofactor. It depends on Zn(2+) as a cofactor.

Its subcellular location is the plastid. It is found in the chloroplast. The catalysed reaction is RNA(n) + a ribonucleoside 5'-triphosphate = RNA(n+1) + diphosphate. Functionally, DNA-dependent RNA polymerase catalyzes the transcription of DNA into RNA using the four ribonucleoside triphosphates as substrates. The protein is DNA-directed RNA polymerase subunit beta' of Dioscorea elephantipes (Elephant's foot yam).